The sequence spans 401 residues: Acetate kinase (401 aa).

A Mg(2+)-binding site is contributed by asparagine 7. Residue lysine 14 participates in ATP binding. Arginine 90 is a binding site for substrate. The active-site Proton donor/acceptor is the aspartate 147. ATP-binding positions include 207–211 (HLGNG), 282–284 (DFR), and 330–334 (GVGEN). Glutamate 383 is a binding site for Mg(2+).

It belongs to the acetokinase family. As to quaternary structure, homodimer. Requires Mg(2+) as cofactor. It depends on Mn(2+) as a cofactor.

It localises to the cytoplasm. The enzyme catalyses acetate + ATP = acetyl phosphate + ADP. Its pathway is metabolic intermediate biosynthesis; acetyl-CoA biosynthesis; acetyl-CoA from acetate: step 1/2. Its function is as follows. Catalyzes the formation of acetyl phosphate from acetate and ATP. Can also catalyze the reverse reaction. The polypeptide is Acetate kinase (Clostridium novyi (strain NT)).